The chain runs to 205 residues: Putative epidermin response regulator (205 aa).

Positions 103-200 (KYIKYVNDDF…ERKLGYKILI (98 aa)) form a DNA-binding region, ompR/PhoB-type.

The protein to the C-terminus of E.coli phosphate regulon transcriptional regulatory protein PhoB.

This chain is Putative epidermin response regulator (epiQ), found in Staphylococcus epidermidis.